The primary structure comprises 251 residues: NADPH-dependent oxidoreductase (251 aa).

It belongs to the flavin oxidoreductase frp family. The cofactor is FMN.

In terms of biological role, reduces FMN, organic nitro compounds and disulfide DTNB. Involved in maintenance of the cellular redox state and the disulfide stress response. This is NADPH-dependent oxidoreductase (nfrA) from Staphylococcus saprophyticus subsp. saprophyticus (strain ATCC 15305 / DSM 20229 / NCIMB 8711 / NCTC 7292 / S-41).